Here is a 117-residue protein sequence, read N- to C-terminus: MAVNIYDLAHDLDKGIRETPEFLSLQDAYREVNENADAKAKFERFRDVQVTIQEKQMTGQEIDDETVNVAQEVAQEVQENELIVKLMEKEQAMSTIINDLNRIIMTPLQDLYNVSND.

The protein belongs to the UPF0342 family.

The polypeptide is UPF0342 protein lwe2240 (Listeria welshimeri serovar 6b (strain ATCC 35897 / DSM 20650 / CCUG 15529 / CIP 8149 / NCTC 11857 / SLCC 5334 / V8)).